The following is a 348-amino-acid chain: Farnesoic acid carboxyl-O-methyltransferase (348 aa).

Tyr16 contacts S-adenosyl-L-methionine. Substrate-binding positions include Tyr16 and 19-23; that span reads HSKYQ. Residues Gly57, 57-58, Asn63, 94-97, 123-125, and 140-142 contribute to the S-adenosyl-L-methionine site; these read GC, FNDS, SFF, and SYS. Position 141-145 (141-145) interacts with substrate; the sequence is YSLHF. Residues Asn162, Asp247, and Phe249 each coordinate Mg(2+).

Belongs to the methyltransferase superfamily. SABATH family. In terms of assembly, homodimer. The cofactor is Mg(2+). In terms of tissue distribution, mostly expressed in leaves and, at very low levels, in roots, stems, flowers and siliques.

The catalysed reaction is (2E,6E)-farnesoate + S-adenosyl-L-methionine = methyl (2E,6E)-farnesoate + S-adenosyl-L-homocysteine. It catalyses the reaction juvenile hormone III carboxylate + S-adenosyl-L-methionine = juvenile hormone III + S-adenosyl-L-homocysteine. It participates in sesquiterpene biosynthesis. With respect to regulation, activated by Mn(2+) ions. Strongly inhibited by Cu(2+), Zn(2+), Fe(3+) and Fe(2+) ions. Moderately inhibited by Na(+) and Ca(2+) ions. Rapidly degraded at temperatures above 40 degrees Celsius. Its function is as follows. May catalyze the production of the insect juvenile hormone methyl farnesoate (MeFA) to trigger defense against insect herbivory. In Arabidopsis thaliana (Mouse-ear cress), this protein is Farnesoic acid carboxyl-O-methyltransferase.